A 237-amino-acid polypeptide reads, in one-letter code: tRNA (guanine-N(7)-)-methyltransferase (237 aa).

4 residues coordinate S-adenosyl-L-methionine: Glu-68, Glu-93, Asp-120, and Asp-143. The active site involves Asp-143. Substrate is bound by residues Lys-147, Asp-179, and 216–219; that span reads TKFE.

This sequence belongs to the class I-like SAM-binding methyltransferase superfamily. TrmB family.

The enzyme catalyses guanosine(46) in tRNA + S-adenosyl-L-methionine = N(7)-methylguanosine(46) in tRNA + S-adenosyl-L-homocysteine. The protein operates within tRNA modification; N(7)-methylguanine-tRNA biosynthesis. Its function is as follows. Catalyzes the formation of N(7)-methylguanine at position 46 (m7G46) in tRNA. This is tRNA (guanine-N(7)-)-methyltransferase from Shewanella halifaxensis (strain HAW-EB4).